The chain runs to 505 residues: Catalase (505 aa).

Positions 1 to 25 (MSQQDKKLTGVFGHPVSDRENSMTA) are disordered. Active-site residues include histidine 56 and asparagine 129. Tyrosine 339 contacts heme.

The protein belongs to the catalase family. As to quaternary structure, homodimer. Heme serves as cofactor.

It carries out the reaction 2 H2O2 = O2 + 2 H2O. Functionally, decomposes hydrogen peroxide into water and oxygen; serves to protect cells from the toxic effects of hydrogen peroxide. This is Catalase (katA) from Staphylococcus aureus.